The primary structure comprises 137 residues: Glutamate mutase sigma subunit (137 aa).

A B12-binding domain is found at 3 to 137 (KKTIVLGVIG…ADLKKDLNIE (135 aa)). Residues 13–17 (SDCHA), His-16, 61–63 (SSL), and 93–97 (NIVVG) each bind adenosylcob(III)alamin.

Belongs to the methylaspartate mutase GlmS subunit family. In terms of assembly, heterotetramer composed of 2 epsilon subunits (GlmE) and 2 sigma subunits (GlmS). GlmE exists as a homodimer and GlmS as a monomer. Requires adenosylcob(III)alamin as cofactor.

It carries out the reaction (2S,3S)-3-methyl-L-aspartate = L-glutamate. It participates in amino-acid degradation; L-glutamate degradation via mesaconate pathway; acetate and pyruvate from L-glutamate: step 1/4. With respect to regulation, competitively inhibited by (2S,4S)-4-fluoroglutamate, 2-methyleneglutarate, (2R,3RS)-3-fluoroglutamate and (S)-3-methylitaconate. Its function is as follows. Catalyzes the carbon skeleton rearrangement of L-glutamate to L-threo-3-methylaspartate ((2S,3S)-3-methylaspartate). The protein is Glutamate mutase sigma subunit of Clostridium cochlearium.